We begin with the raw amino-acid sequence, 317 residues long: Melanocyte-stimulating hormone receptor (317 aa).

The Extracellular segment spans residues 1 to 37 (MPVQGSQRRLLGSLNSTPTATPHLGLAANQTGARCLE). An N-linked (GlcNAc...) asparagine glycan is attached at asparagine 29. Residues 38–63 (MSIPDGLFLSLGLVSLVENVLVVTAI) form a helical membrane-spanning segment. At 64-72 (AKNRNLHSP) the chain is on the cytoplasmic side. Residues 73 to 93 (MYCFICCLALSDLLVSGSNML) form a helical membrane-spanning segment. Residues 94-118 (ETAVTLLLEAGALAARAAVVQQLDN) are Extracellular-facing. A helical transmembrane segment spans residues 119 to 140 (VIDVITCSSMLSSLCFLGAIAV). Residues 141-163 (DRYISIFYALRYHSIVTLPRARR) lie on the Cytoplasmic side of the membrane. The helical transmembrane segment at 164 to 183 (AIAAIWVASVLCSTLFIAYY) threads the bilayer. Over 184–191 (DHAAVLLC) the chain is Extracellular. A helical transmembrane segment spans residues 192–211 (LVVFFLAMLVLMAVLYVHML). Residues 212-240 (ARACQHAQGIARLHKRQRLAHQGFGLKGA) lie on the Cytoplasmic side of the membrane. A helical transmembrane segment spans residues 241-266 (ATLTILLGIFFLCWGPFFLHLTLIVL). At 267–279 (CPQHPTCSCIFKN) the chain is on the extracellular side. A helical transmembrane segment spans residues 280–300 (FNLFLTLIICNAIIDPLIYAF). The Cytoplasmic segment spans residues 301-317 (RSQELRRTLKEVLLCSW). The S-palmitoyl cysteine moiety is linked to residue cysteine 315.

Belongs to the G-protein coupled receptor 1 family. In terms of assembly, interacts with MGRN1, but does not undergo MGRN1-mediated ubiquitination; this interaction competes with GNAS-binding and thus inhibits agonist-induced cAMP production. Interacts with OPN3; the interaction results in a decrease in MC1R-mediated cAMP signaling and ultimately a decrease in melanin production in melanocytes.

The protein resides in the cell membrane. Its function is as follows. Receptor for MSH (alpha, beta and gamma) and ACTH. The activity of this receptor is mediated by G proteins which activate adenylate cyclase. Mediates melanogenesis, the production of eumelanin (black/brown) and phaeomelanin (red/yellow), via regulation of cAMP signaling in melanocytes. This chain is Melanocyte-stimulating hormone receptor (MC1R), found in Macaca nemestrina (Pig-tailed macaque).